Reading from the N-terminus, the 353-residue chain is Photosystem II D2 protein (353 aa).

Threonine 2 is modified (N-acetylthreonine). Threonine 2 bears the Phosphothreonine mark. A helical transmembrane segment spans residues 41–61 (CAYFALGGWFTGTTFVTSWYT). Histidine 118 is a binding site for chlorophyll a. Residues 125–141 (GFMLRQFELARSVQLRP) form a helical membrane-spanning segment. Residues glutamine 130 and asparagine 143 each coordinate pheophytin a. Residues 153 to 166 (VFVSVFLIYPLGQS) form a helical membrane-spanning segment. Histidine 198 is a binding site for chlorophyll a. The chain crosses the membrane as a helical span at residues 208 to 228 (AALLCAIHGATVENTLFEDGD). A plastoquinone contacts are provided by histidine 215 and phenylalanine 262. Fe cation is bound at residue histidine 215. Residue histidine 269 coordinates Fe cation. A helical membrane pass occupies residues 279–295 (GLWMSALGVVGLALNLR).

This sequence belongs to the reaction center PufL/M/PsbA/D family. PSII is composed of 1 copy each of membrane proteins PsbA, PsbB, PsbC, PsbD, PsbE, PsbF, PsbH, PsbI, PsbJ, PsbK, PsbL, PsbM, PsbT, PsbX, PsbY, PsbZ, Psb30/Ycf12, at least 3 peripheral proteins of the oxygen-evolving complex and a large number of cofactors. It forms dimeric complexes. It depends on The D1/D2 heterodimer binds P680, chlorophylls that are the primary electron donor of PSII, and subsequent electron acceptors. It shares a non-heme iron and each subunit binds pheophytin, quinone, additional chlorophylls, carotenoids and lipids. There is also a Cl(-1) ion associated with D1 and D2, which is required for oxygen evolution. The PSII complex binds additional chlorophylls, carotenoids and specific lipids. as a cofactor.

The protein localises to the plastid. It is found in the chloroplast thylakoid membrane. The enzyme catalyses 2 a plastoquinone + 4 hnu + 2 H2O = 2 a plastoquinol + O2. Functionally, photosystem II (PSII) is a light-driven water:plastoquinone oxidoreductase that uses light energy to abstract electrons from H(2)O, generating O(2) and a proton gradient subsequently used for ATP formation. It consists of a core antenna complex that captures photons, and an electron transfer chain that converts photonic excitation into a charge separation. The D1/D2 (PsbA/PsbD) reaction center heterodimer binds P680, the primary electron donor of PSII as well as several subsequent electron acceptors. D2 is needed for assembly of a stable PSII complex. This Nandina domestica (Heavenly bamboo) protein is Photosystem II D2 protein.